A 1237-amino-acid polypeptide reads, in one-letter code: MSVLTSPRGKVEVVHCRRTESQDVYCIKSLIRKFTCKLFGKLNIIYLLEKANLAVTLCNDKEEIMAQATFLDYPNWNVAKQDDWVSVFRELDSDIPCTPLNTLFMHLFVAVDEYSVGCCKEILRTVYKAVPELHFIFLIVPSYMSLGSTLITVFDQVGNIPCLTYEEDFAVHICHRHSHYPQLHVRKARVEDHDDLMPIFMRYDTILKETYGEYFLAELIEAQDEENHAVVCEVEGTAVGFMSVCSRVNMQLLHECFDLGPFHGLCFPHPDDVLESPQDLSVRRSQDAELRSSSQGSQKIVEELQEPVSPDTMENIQGNIAREAASEEALTAVQSGNVSEPEDIEKLSDISTGYAQYHHVSSRSLASLVLPEEPVHFRPIYRGASAAFCIQLFCIDEKYEARSLDFMNFVFSLFSDKNFCVISLPHLTPEFFLIQNFVKMVPFNTCTLEQDLYVFHRAGLLKSINIRFATLLDTPGVENLVSTLMLNKSILEDLDRYNKARKDPDGTLLQAFVAEVAEQIVGIAVIRNEMDIEYIRSHYNIEDFIYFSHHQREEHGHMHHFALNPIFRHYTKFFLKEILRLGFKSCLYYRVYPKSREGKFQNPYAHSLTSALHYLVPVRPRRQIVYPLEKLGINAPSKAVSKDPMSYALNHTNRKLTLEPKITVNAKIIVVGASSVGISFLETLVFCSHMKFNNLTLISTHGLPGKKLLDTEQRKFLASDHCFNDKDYALMSLCSWVNVVVGRMTGIDRAAKHVVLSTDEIVPYDHLILCTGQQYQVPCPTEADISQHLTNREVPNSSQRRYTGKVPCNHFTLNEEEDCFKALIWIRNNSITTEGNIIVYGNTIDTYTTVETLLNLGVSGSRIHLVQPPPASTITCINNYSVESAVADALGAAGVTMYRDAILAQWNDGLHPDPIYSASFTTPTKPFRLQCSMFFSFCEKNVDYETFKALNDACLVYDSRLVIDTNFHTNDIAIRAAGSLTKFSNRYYSNEWTHSNFSSKEIGFQLAAAMLHLFDPTLEPVTEPPANLDRLIPMYKGAKIQGGILPGSYHYLHIAKPAIPTPLEVQMAQPNYGLELVTGSAKNGTYFRIHINKYKMVETITCLSREPFPASNYIRLFGQHEQLLNNLCARYDENLITDLYSYFTEPWCLALFHDRFIDLRKELRQILASKEEEDLPSIEQLAHQIEDEEINPTEKPRQYLKRVFEESIYKTLVERSTLDYLHYNRYHLPMYAWPGIV.

A disordered region spans residues 278–301; sequence QDLSVRRSQDAELRSSSQGSQKIV. Over residues 281–290 the composition is skewed to basic and acidic residues; sequence SVRRSQDAEL.

In terms of assembly, component of axonemal radial spokes, the protein complexes that link the outer microtubule doublets with the central pair of microtubules. Interacts with CFAP91/MAATS1, ODAD2/ARMC4, RSPH3A, ROPN1, ROPN1L and RSPH9. Interacts with DYNLT1, DYNC1I2 and TUBB3. Interacts with WDR35, IFT22 and IFT81.

The protein resides in the cytoplasm. Its subcellular location is the cytoskeleton. It localises to the flagellum axoneme. Its function is as follows. Involved in sperm flagellum assembly. Plays an essential role in the formation of the radial spokes in flagellum axoneme. This is Cilia- and flagella-associated protein 61 from Homo sapiens (Human).